The following is a 252-amino-acid chain: 2-succinyl-6-hydroxy-2,4-cyclohexadiene-1-carboxylate synthase (252 aa).

The protein belongs to the AB hydrolase superfamily. MenH family. In terms of assembly, monomer.

The catalysed reaction is 5-enolpyruvoyl-6-hydroxy-2-succinyl-cyclohex-3-ene-1-carboxylate = (1R,6R)-6-hydroxy-2-succinyl-cyclohexa-2,4-diene-1-carboxylate + pyruvate. Its pathway is quinol/quinone metabolism; 1,4-dihydroxy-2-naphthoate biosynthesis; 1,4-dihydroxy-2-naphthoate from chorismate: step 3/7. It functions in the pathway quinol/quinone metabolism; menaquinone biosynthesis. In terms of biological role, catalyzes a proton abstraction reaction that results in 2,5-elimination of pyruvate from 2-succinyl-5-enolpyruvyl-6-hydroxy-3-cyclohexene-1-carboxylate (SEPHCHC) and the formation of 2-succinyl-6-hydroxy-2,4-cyclohexadiene-1-carboxylate (SHCHC). In Klebsiella pneumoniae (strain 342), this protein is 2-succinyl-6-hydroxy-2,4-cyclohexadiene-1-carboxylate synthase.